The sequence spans 389 residues: Zinc finger C2HC domain-containing protein 1C homolog (389 aa).

Disordered regions lie at residues 16 to 44 (MLPH…SQQS) and 84 to 115 (SYPH…GPQS). 2 stretches are compositionally biased toward polar residues: residues 35–44 (YEQGDSSQQS) and 90–102 (GISQ…DSQG). A coiled-coil region spans residues 211-266 (VQIRRLEAAGESLEEEIRRKQILLRGKLKKTEEELRRIQMQKEQAKENENRELQKI). 2 disordered regions span residues 301–320 (REDE…QLSD) and 343–389 (SELS…PQLG). Positions 307 to 317 (GRSQQNSSPFQ) are enriched in polar residues. Residues 368 to 382 (SSLSMAPDSSGSSGS) show a composition bias toward low complexity.

The protein belongs to the ZC2HC1 family.

The sequence is that of Zinc finger C2HC domain-containing protein 1C homolog (ZC2HC1C) from Pongo abelii (Sumatran orangutan).